Reading from the N-terminus, the 360-residue chain is WAT1-related protein At3g28070 (360 aa).

The next 10 membrane-spanning stretches (helical) occupy residues 15 to 35 (AVFL…STLF), 45 to 65 (IYPF…PSLF), 84 to 104 (IGLL…GIEY), 108 to 128 (TLAS…AIIF), 140 to 160 (SLAK…VIFY), 190 to 210 (WLIG…SFIL), 224 to 244 (VSFL…LVVE), 248 to 268 (PSVW…MAIV), 286 to 306 (LYLA…GAIF), and 311 to 331 (LYLG…AVMW). The EamA domain maps to 30–158 (GISTLFKFAT…LSLIGALVVI (129 aa)).

This sequence belongs to the drug/metabolite transporter (DMT) superfamily. Plant drug/metabolite exporter (P-DME) (TC 2.A.7.4) family.

It localises to the membrane. This Arabidopsis thaliana (Mouse-ear cress) protein is WAT1-related protein At3g28070.